A 25-amino-acid chain; its full sequence is GLLSVLGSVAQHVLPHVVPVIAEHL.

Position 25 is a leucine amide (Leu-25).

As to expression, expressed by the skin parotoid and/or rostral glands.

It localises to the secreted. Functionally, antibacterial peptide, that adopts an alpha helical conformation which can disrupt bacterial membranes. Each caerin displays a different antimicrobial specificity. The sequence is that of Caerin-1.3 from Ranoidea caerulea (Green tree frog).